Here is a 219-residue protein sequence, read N- to C-terminus: uncharacterized protein (219 aa).

The next 2 membrane-spanning stretches (helical) occupy residues M8–V28 and G194–F214.

The protein resides in the cell membrane. This is an uncharacterized protein from Archaeoglobus fulgidus (strain ATCC 49558 / DSM 4304 / JCM 9628 / NBRC 100126 / VC-16).